A 133-amino-acid chain; its full sequence is Hydrogenase maturation factor HypA (133 aa).

Ni(2+) is bound at residue His2. Positions 73, 75, 105, and 108 each coordinate Zn(2+).

The protein belongs to the HypA/HybF family.

In terms of biological role, involved in the maturation of [NiFe] hydrogenases. Required for nickel insertion into the metal center of the hydrogenase. The protein is Hydrogenase maturation factor HypA of Methanosarcina barkeri (strain Fusaro / DSM 804).